The sequence spans 580 residues: CRISPR-associated exonuclease Cas4/endonuclease Cas1 fusion (580 aa).

Residues 1–223 (MAPSDTPPSA…RCSLLPICLP (223 aa)) form a CRISPR-associated exonuclease Cas4 region. Cys-44 provides a ligand contact to [4Fe-4S] cluster. Residues Asp-112 and Glu-125 each contribute to the Mn(2+) site. 3 residues coordinate [4Fe-4S] cluster: Cys-212, Cys-215, and Cys-221. The tract at residues 248 to 580 (LYGQTPGARI…IPRYPHYCPR (333 aa)) is CRISPR-associated endonuclease Cas1. Glu-401, His-472, and Glu-487 together coordinate Mn(2+).

The protein in the N-terminal section; belongs to the CRISPR-associated exonuclease Cas4 family. It in the C-terminal section; belongs to the CRISPR-associated endonuclease Cas1 family. In terms of assembly, homodimer, forms a heterotetramer with a Cas2 homodimer. It depends on [4Fe-4S] cluster as a cofactor. Mg(2+) serves as cofactor. Mn(2+) is required as a cofactor.

It carries out the reaction exonucleolytic cleavage in the 5'- to 3'-direction to yield nucleoside 3'-phosphates.. Its function is as follows. CRISPR (clustered regularly interspaced short palindromic repeat), is an adaptive immune system that provides protection against mobile genetic elements (viruses, transposable elements and conjugative plasmids). CRISPR clusters contain spacers, sequences complementary to antecedent mobile elements, and target invading nucleic acids. CRISPR clusters are transcribed and processed into CRISPR RNA (crRNA). The Cas4 region acts as a ssDNA exonuclease, while the Cas1 region acts as a dsDNA endonuclease. Involved in the integration of spacer DNA into the CRISPR cassette. The polypeptide is CRISPR-associated exonuclease Cas4/endonuclease Cas1 fusion (cas4-cas1) (Rhodospirillum rubrum (strain ATCC 11170 / ATH 1.1.1 / DSM 467 / LMG 4362 / NCIMB 8255 / S1)).